Here is a 305-residue protein sequence, read N- to C-terminus: MVTISDVANLLSRNTINYSIIDYPEKKKSIDIITEEQNDKRRILVLKINNSTSDRRNFRILFDLKKISEVTESLPLIIDDNIEDDVVSEKDGVFSMNLYTLERSLRGEKIFLLKTRGGIFVRVDSKKLREKREEKNMSLGELSQRLGVSRISVYDYEKEDSYVSIEVAEKLIEIFGDEVIGDIIKDYDSNTKKKKELQSDYNEEVKILEKLDRVLSDANYKTVKFNFTAIDMAAIKGSEKLIFCTEVNTLANSLKKFNEANKIASKINAKLLVIAKSSKTSKVYEKENFNVYIYNDIDKVVDESS.

An HTH cro/C1-type domain is found at 128-183; sequence LREKREEKNMSLGELSQRLGVSRISVYDYEKEDSYVSIEVAEKLIEIFGDEVIGDI. Residues 139 to 158 constitute a DNA-binding region (H-T-H motif); that stretch reads LGELSQRLGVSRISVYDYEK.

The protein is Putative HTH-type transcriptional regulatory protein Saci_1344 of Sulfolobus acidocaldarius (strain ATCC 33909 / DSM 639 / JCM 8929 / NBRC 15157 / NCIMB 11770).